Consider the following 707-residue polypeptide: Polyribonucleotide nucleotidyltransferase (707 aa).

Positions 488 and 494 each coordinate Mg(2+). A KH domain is found at Pro-555–Ile-615. Residues Gly-625–Val-692 form the S1 motif domain.

This sequence belongs to the polyribonucleotide nucleotidyltransferase family. Mg(2+) is required as a cofactor.

It localises to the cytoplasm. The catalysed reaction is RNA(n+1) + phosphate = RNA(n) + a ribonucleoside 5'-diphosphate. Its function is as follows. Involved in mRNA degradation. Catalyzes the phosphorolysis of single-stranded polyribonucleotides processively in the 3'- to 5'-direction. The protein is Polyribonucleotide nucleotidyltransferase of Thermotoga neapolitana (strain ATCC 49049 / DSM 4359 / NBRC 107923 / NS-E).